A 535-amino-acid polypeptide reads, in one-letter code: Bifunctional purine biosynthesis protein PurH (535 aa).

An MGS-like domain is found at 6-151 (TRLPIRRALI…KNHKDVAIVV (146 aa)).

Belongs to the PurH family.

The enzyme catalyses (6R)-10-formyltetrahydrofolate + 5-amino-1-(5-phospho-beta-D-ribosyl)imidazole-4-carboxamide = 5-formamido-1-(5-phospho-D-ribosyl)imidazole-4-carboxamide + (6S)-5,6,7,8-tetrahydrofolate. It carries out the reaction IMP + H2O = 5-formamido-1-(5-phospho-D-ribosyl)imidazole-4-carboxamide. Its pathway is purine metabolism; IMP biosynthesis via de novo pathway; 5-formamido-1-(5-phospho-D-ribosyl)imidazole-4-carboxamide from 5-amino-1-(5-phospho-D-ribosyl)imidazole-4-carboxamide (10-formyl THF route): step 1/1. The protein operates within purine metabolism; IMP biosynthesis via de novo pathway; IMP from 5-formamido-1-(5-phospho-D-ribosyl)imidazole-4-carboxamide: step 1/1. This chain is Bifunctional purine biosynthesis protein PurH, found in Pseudomonas paraeruginosa (strain DSM 24068 / PA7) (Pseudomonas aeruginosa (strain PA7)).